We begin with the raw amino-acid sequence, 735 residues long: MADEAEQAGLRILGDVLSAAHSAGDLSCLSPDLLARIADTFHLQRVSLFQVHEAEGRGIAATCVIDWRRPGLAFPAMTEGSHPPLTAAGGDPLLAQWAARRRRGETIIGRTRDLTGYLYGFFSHYGVVTFLTEPVMVHGRWWGHFCVDTPDAEHEWTAVERQAFKCIAAVLAGLLARSGTEGLVSEAARRAMLDTSIDAVIVADEAGAIVEFNHAAEAIFGHTREGVIGRPMTETIIPAHYIDRHRQGFMRHLATGENHIMRRLVEVEALRADGSVFPAELTVNEHRAGGRRLFSAFVRDISDRITSRRALERLAFTDMHTGLSNRTGLLRLCTGRPTRPSGAVVLMLRDLGVVKTSFGDDWAEPMIVETANLLSRMLPQEACLGRTGESEFTVVTWQPGAAAELAETLIGRLRSAIESGGRRFYLRVGLGVVERPGDATYLLRDAEMAARDCRDGHLLHFAEHMRAQHQQRLELEMALRDVIQRRTSALSLHYQPVVSARTGGLVGFEALVRWYSETHGPVSPALFVPLAEAGGFAERLGAWVIETAISACAGWNVRRRAHGLAPWHIAINLSATEVVAPDLIERVRQTMAFHGLPPQCVCFELTESAILNQPEIAIETLSRLRALGCTTAIDDFGTGYSSLSYLQRLPMDVLKIDRSFVLDMVDNSRSREIVRVMIEMAHGLGMSVVAEGVETTGALQILRQMGCDRAQGFLFGRAMPGDVAGTLPETLAPTG.

The GAF domain maps to 25 to 175 (DLSCLSPDLL…CIAAVLAGLL (151 aa)). The PAS domain maps to 185–255 (SEAARRAMLD…RQGFMRHLAT (71 aa)). The PAC domain maps to 263–313 (RLVEVEALRADGSVFPAELTVNEHRAGGRRLFSAFVRDISDRITSRRALER). Positions 342–464 (GAVVLMLRDL…DGHLLHFAEH (123 aa)) constitute a GGDEF domain. The 261-residue stretch at 472-732 (RLELEMALRD…VAGTLPETLA (261 aa)) folds into the EAL domain.

This is an uncharacterized protein from Azorhizobium caulinodans (strain ATCC 43989 / DSM 5975 / JCM 20966 / LMG 6465 / NBRC 14845 / NCIMB 13405 / ORS 571).